The following is a 185-amino-acid chain: Endoribonuclease YbeY (185 aa).

3 residues coordinate Zn(2+): histidine 142, histidine 146, and histidine 152.

Belongs to the endoribonuclease YbeY family. Zn(2+) serves as cofactor.

Its subcellular location is the cytoplasm. In terms of biological role, single strand-specific metallo-endoribonuclease involved in late-stage 70S ribosome quality control and in maturation of the 3' terminus of the 16S rRNA. This is Endoribonuclease YbeY from Parvibaculum lavamentivorans (strain DS-1 / DSM 13023 / NCIMB 13966).